A 435-amino-acid polypeptide reads, in one-letter code: MSIITDVYAREVLDSRGNPTLEVEVYTESGAFGRGMVPSGASTGEHEAVELRDGDKSRYGGLGTQKAVDNVNNVIAEAIIGYDVRDQQAIDRAMIALDGTPNKGKLGANAILGVSIAVARAAADYLEVPLYSYLGGFNTKVLPTPMMNIINGGSHSDAPIAFQEFMIMPVGAPTFKEALRWGAEVFHALKKILKERGLETAVGDEGGFAPKFEGTEDGVETILKAIEAAGYEAGENGIMIGFDCASSEFYDAERKVYDYSKFEGEGGAVRTAAEQIDYLEELVNKYPIITIEDGMDENDWDGWKALTERLGGRVQLVGDDFFVTNTDYLARGIKEEAANSILIKVNQIGTLTETFEAIEMAKEAGYTAVVSHRSGETEDSTIADIAVATNAGQIKTGSLSRTDRIAKYNQLLRIEDQLGEVAQYKGIKSFYNLKK.

Q163 lines the (2R)-2-phosphoglycerate pocket. The active-site Proton donor is E205. D243, E292, and D319 together coordinate Mg(2+). (2R)-2-phosphoglycerate-binding residues include K344, R373, S374, and K395. K344 (proton acceptor) is an active-site residue.

This sequence belongs to the enolase family. Requires Mg(2+) as cofactor.

Its subcellular location is the cytoplasm. The protein resides in the secreted. The protein localises to the cell surface. The catalysed reaction is (2R)-2-phosphoglycerate = phosphoenolpyruvate + H2O. Its pathway is carbohydrate degradation; glycolysis; pyruvate from D-glyceraldehyde 3-phosphate: step 4/5. Its function is as follows. Catalyzes the reversible conversion of 2-phosphoglycerate (2-PG) into phosphoenolpyruvate (PEP). It is essential for the degradation of carbohydrates via glycolysis. This Streptococcus agalactiae serotype Ia (strain ATCC 27591 / A909 / CDC SS700) protein is Enolase.